Consider the following 806-residue polypeptide: N-terminal kinase-like protein (806 aa).

Positions phenylalanine 14–leucine 314 constitute a Protein kinase domain. HEAT repeat units lie at residues isoleucine 350–glutamine 388, isoleucine 389–glutamate 427, and isoleucine 507–threonine 545. Disordered regions lie at residues arginine 586–arginine 642 and aspartate 663–aspartate 806. Residues arginine 601–alanine 611 are compositionally biased toward pro residues. Phosphoserine is present on serine 752. Residues serine 752 to glutamate 762 are compositionally biased toward acidic residues. Residues glutamate 755–lysine 795 are a coiled coil. Composition is skewed to basic and acidic residues over residues alanine 763 to alanine 773 and arginine 780 to threonine 793. The interaction with COPB1 stretch occupies residues lysine 791–aspartate 806.

This sequence belongs to the protein kinase superfamily. As to quaternary structure, homooligomer. Interacts with GORAB. Interacts with COPA, COPB1 and COPB2. Interacts with AP2B1. In terms of tissue distribution, expressed in diaphragm, quadriceps, thymus, liver, lung, spleen, kidney, heart and brain. Prominently expressed in neurons, and enriched at central nervous system synapses and neuromuscular junctions.

It localises to the cytoplasm. It is found in the cytoskeleton. The protein resides in the microtubule organizing center. The protein localises to the centrosome. Its subcellular location is the endoplasmic reticulum-Golgi intermediate compartment. It localises to the golgi apparatus. It is found in the cis-Golgi network. Regulates COPI-mediated retrograde protein traffic at the interface between the Golgi apparatus and the endoplasmic reticulum. Involved in the maintenance of the Golgi apparatus morphology. This is N-terminal kinase-like protein (Scyl1) from Mus musculus (Mouse).